The following is a 352-amino-acid chain: Fe-S cluster assembly protein DRE2 (352 aa).

Over residues 1-11 (MAPTAVYTQKD) the composition is skewed to polar residues. The interval 1 to 24 (MAPTAVYTQKDSPSSSQPSSKGPA) is disordered. Residues 1 to 196 (MAPTAVYTQK…TVTSAPSVPL (196 aa)) are N-terminal SAM-like domain. Positions 196-237 (LLLRKRGDPAKKKALWALTTDASASPSTKIDADALLTAEDKA) are linker. Cysteine 243, cysteine 257, cysteine 260, and cysteine 262 together coordinate [2Fe-2S] cluster. The fe-S binding site A stretch occupies residues 243–262 (CAPVDRSAPRRKKACKNCSC). [4Fe-4S] cluster-binding residues include cysteine 315, cysteine 318, cysteine 326, and cysteine 329. 2 short sequence motifs (cx2C motif) span residues 315–318 (CGSC) and 326–329 (CAGC). A fe-S binding site B region spans residues 315 to 329 (CGSCFLGDAFRCAGC).

This sequence belongs to the anamorsin family. Monomer. Interacts with TAH18. Interacts with MIA40. The cofactor is [2Fe-2S] cluster. Requires [4Fe-4S] cluster as cofactor.

It is found in the cytoplasm. It localises to the mitochondrion intermembrane space. Functionally, component of the cytosolic iron-sulfur (Fe-S) protein assembly (CIA) machinery required for the maturation of extramitochondrial Fe-S proteins. Part of an electron transfer chain functioning in an early step of cytosolic Fe-S biogenesis, facilitating the de novo assembly of a [4Fe-4S] cluster on the scaffold complex CFD1-NBP35. Electrons are transferred to DRE2 from NADPH via the FAD- and FMN-containing protein TAH18. TAH18-DRE2 are also required for the assembly of the diferric tyrosyl radical cofactor of ribonucleotide reductase (RNR), probably by providing electrons for reduction during radical cofactor maturation in the catalytic small subunit RNR2. In Coprinopsis cinerea (strain Okayama-7 / 130 / ATCC MYA-4618 / FGSC 9003) (Inky cap fungus), this protein is Fe-S cluster assembly protein DRE2.